A 214-amino-acid polypeptide reads, in one-letter code: Outer-membrane lipoprotein carrier protein (214 aa).

The signal sequence occupies residues Met-1–Ala-23.

It belongs to the LolA family. As to quaternary structure, monomer.

It is found in the periplasm. Functionally, participates in the translocation of lipoproteins from the inner membrane to the outer membrane. Only forms a complex with a lipoprotein if the residue after the N-terminal Cys is not an aspartate (The Asp acts as a targeting signal to indicate that the lipoprotein should stay in the inner membrane). The protein is Outer-membrane lipoprotein carrier protein of Shewanella frigidimarina (strain NCIMB 400).